A 338-amino-acid polypeptide reads, in one-letter code: Heat-inducible transcription repressor HrcA (338 aa).

This sequence belongs to the HrcA family.

Negative regulator of class I heat shock genes (grpE-dnaK-dnaJ and groELS operons). Prevents heat-shock induction of these operons. The chain is Heat-inducible transcription repressor HrcA from Thermotoga petrophila (strain ATCC BAA-488 / DSM 13995 / JCM 10881 / RKU-1).